Here is a 282-residue protein sequence, read N- to C-terminus: Putative phosphoesterase 244L (282 aa).

Positions 45, 80, and 203 each coordinate a divalent metal cation.

Belongs to the metallophosphoesterase superfamily. IIV-6 244L family.

In Invertebrate iridescent virus 6 (IIV-6), this protein is Putative phosphoesterase 244L.